Consider the following 387-residue polypeptide: Putative glutamate--cysteine ligase 2 (387 aa).

It belongs to the glutamate--cysteine ligase type 2 family. YbdK subfamily.

It catalyses the reaction L-cysteine + L-glutamate + ATP = gamma-L-glutamyl-L-cysteine + ADP + phosphate + H(+). Its function is as follows. ATP-dependent carboxylate-amine ligase which exhibits weak glutamate--cysteine ligase activity. This Trichormus variabilis (strain ATCC 29413 / PCC 7937) (Anabaena variabilis) protein is Putative glutamate--cysteine ligase 2.